Consider the following 105-residue polypeptide: MAKGNSPLERPSLASLDQKLAFAKRCSHEGVLAGAKAAVVASVASAIPTLASVRMLPWARANLNHTAQALIISTATAAAYFIVADKTVLATARKNSFNQPSNSEA.

The helical transmembrane segment at 66–83 threads the bilayer; it reads TAQALIISTATAAAYFIV.

It localises to the membrane. This Glycine max (Soybean) protein is Early nodulin-93.